A 257-amino-acid polypeptide reads, in one-letter code: Thioredoxin-dependent peroxide reductase, mitochondrial (257 aa).

A mitochondrion-targeting transit peptide spans 1–62 (MAATAGRLFR…FAFSTSSSYH (62 aa)). In terms of domain architecture, Thioredoxin spans 64–222 (PAVTQHAPYF…TLRLVKAFQF (159 aa)). At K84 the chain carries N6-succinyllysine. N6-acetyllysine; alternate is present on K92. K92 is modified (N6-succinyllysine; alternate). Residue C109 is the Cysteine sulfenic acid (-SOH) intermediate of the active site. Residue T147 is modified to Phosphothreonine.

It belongs to the peroxiredoxin family. AhpC/Prx1 subfamily. As to quaternary structure, homodimer; disulfide-linked, upon oxidation. 6 homodimers assemble to form a ring-like dodecamer. Interacts with NEK6. Interacts with LRRK2. Interacts with MAP3K13. Interacts with RPS6KC1 (via PX domain). Post-translationally, phosphorylated by LRRK2; phosphorylation reduces perodixase activity. In terms of processing, the enzyme can be inactivated by further oxidation of the cysteine sulfenic acid (C(P)-SOH) to sulphinic acid (C(P)-SO2H) and sulphonic acid (C(P)-SO3H) instead of its condensation to a disulfide bond. S-palmitoylated. In terms of tissue distribution, predominantly expressed in adrenal cortex. Also detected in liver, renal cortex and medulla, and adrenal medulla (at protein level).

Its subcellular location is the mitochondrion matrix. It is found in the cytoplasm. The protein resides in the early endosome. The enzyme catalyses a hydroperoxide + [thioredoxin]-dithiol = an alcohol + [thioredoxin]-disulfide + H2O. Thiol-specific peroxidase that catalyzes the reduction of hydrogen peroxide and organic hydroperoxides to water and alcohols, respectively. Plays a role in cell protection against oxidative stress by detoxifying peroxides. Acts synergistically with MAP3K13 to regulate the activation of NF-kappa-B in the cytosol. Required for the maintenance of physical strength. This chain is Thioredoxin-dependent peroxide reductase, mitochondrial (PRDX3), found in Bos taurus (Bovine).